Here is a 1265-residue protein sequence, read N- to C-terminus: Shugoshin 2 (1265 aa).

Residues 69 to 116 adopt a coiled-coil conformation; the sequence is KENSRRITTEKMLLQKEVEKLNFENTFLRLKLNNLNKKLIDIEALMNN. Disordered stretches follow at residues 161-202, 230-287, 305-339, and 381-447; these read LTSN…STQD, DVPP…NLSA, LNCNNEINGHTNETNTEMQRNKQDLPGLSSESARE, and GIKK…GAED. The segment covering 190–202 has biased composition (polar residues); sequence SSGSTTQPLSTQD. The segment covering 232–242 has biased composition (basic and acidic residues); the sequence is PPRESHSHSDQ. A compositionally biased stretch (polar residues) spans 305-322; sequence LNCNNEINGHTNETNTEM. Basic and acidic residues-rich tracts occupy residues 389 to 410 and 425 to 446; these read KTNEHGMKTFRKVKDSSSEKKR and IGEKIENRTERSDVLDGKRGAE. Positions 452–476 form a coiled coil; it reads FNNEQLAQMNEQLAQVNELKKMTLQ. Residues 499–526 form a disordered region; that stretch reads EQEETYSLSQSSGKFHQESKFDKGQNSL. Residues 503 to 512 are compositionally biased toward polar residues; that stretch reads TYSLSQSSGK. Residues 603–626 are a coiled coil; that stretch reads EQNESNINKLRKKVNRKTEIISGM. A compositionally biased stretch (basic residues) spans 1073-1083; the sequence is NKMTSKSKKRK. The tract at residues 1073 to 1093 is disordered; it reads NKMTSKSKKRKTSIDPSPESH. Residue Ser1144 is modified to Phosphoserine. Residues 1200–1265 form a disordered region; the sequence is KVNRRTQKSG…EPSLRDKMRR (66 aa). Residues 1217-1230 are compositionally biased toward polar residues; it reads DLSNTSFVSNNTAE. Residues 1231 to 1243 are compositionally biased toward basic and acidic residues; that stretch reads SENKSEDLSSERT.

Belongs to the shugoshin family. As to quaternary structure, part of an astrin (SPAG5) -kinastrin (SKAP) complex containing KNSTRN, SPAG5, PLK1, DYNLL1 and SGO2. Interacts with CDCA8. Directly interacts with PPP2CA.

It is found in the nucleus. It localises to the chromosome. The protein resides in the centromere. The protein localises to the kinetochore. Functionally, cooperates with PPP2CA to protect centromeric cohesin from separase-mediated cleavage in oocytes specifically during meiosis I. Has a crucial role in protecting REC8 at centromeres from cleavage by separase. During meiosis, protects centromeric cohesion complexes until metaphase II/anaphase II transition, preventing premature release of meiosis-specific REC8 cohesin complexes from anaphase I centromeres. Is thus essential for an accurate gametogenesis. May act by targeting PPP2CA to centromeres, thus leading to cohesin dephosphorylation. Essential for recruiting KIF2C to the inner centromere and for correcting defective kinetochore attachments. Involved in centromeric enrichment of AUKRB in prometaphase. This Homo sapiens (Human) protein is Shugoshin 2.